A 262-amino-acid chain; its full sequence is Adenosylcobinamide-GDP ribazoletransferase (262 aa).

The next 4 helical transmembrane spans lie at 43–63 (PLAG…LGAI), 121–141 (VALI…LPLL), 145–165 (GGGV…VWHW), and 195–215 (GVIL…AVLL).

Belongs to the CobS family. It depends on Mg(2+) as a cofactor.

Its subcellular location is the cell inner membrane. It catalyses the reaction alpha-ribazole + adenosylcob(III)inamide-GDP = adenosylcob(III)alamin + GMP + H(+). The catalysed reaction is alpha-ribazole 5'-phosphate + adenosylcob(III)inamide-GDP = adenosylcob(III)alamin 5'-phosphate + GMP + H(+). It functions in the pathway cofactor biosynthesis; adenosylcobalamin biosynthesis; adenosylcobalamin from cob(II)yrinate a,c-diamide: step 7/7. Joins adenosylcobinamide-GDP and alpha-ribazole to generate adenosylcobalamin (Ado-cobalamin). Also synthesizes adenosylcobalamin 5'-phosphate from adenosylcobinamide-GDP and alpha-ribazole 5'-phosphate. This chain is Adenosylcobinamide-GDP ribazoletransferase, found in Sinorhizobium medicae (strain WSM419) (Ensifer medicae).